A 396-amino-acid chain; its full sequence is MSTFNSYSQPKESNDNSHNNVNKSKSLLDIIFGTNVSEWAFSENALMKAMDLKIEQEKTKQQYYKLENLNRSIELFKLASSSGLPINQIHKLFNTDHGVPASSPMKAGGNQPHNNTEGTQSSENLPRLNGSMKSLKPLNMNTVSPTPMSRQPSPYKFPASSSTGGISHSTVTNVQRRANSPARIGASAVAALNDNISIKEEDVARRIPSGTKSQESPLNKKPTSLHSRNLSLPIGKFTNPNIPSTMTSILSFNRDQQQPLSQPLPPPPQQQQDLHTHNLHTIPRKPGMVQKKHRRARSTSSFGVIDLSIIDEAKEKQVQRSPSPIHSNVSVALTSHDKPIESNMKEQPNMLQSVREGRQVHDDLDDRTCSESSSRNESPVRTITKDNSVGKILNST.

Disordered stretches follow at residues 1 to 22 (MSTF…NNVN), 98 to 126 (GVPA…ENLP), 145 to 168 (PTPM…GISH), 203 to 239 (VARR…KFTN), 254 to 274 (RDQQ…QQDL), and 355 to 396 (REGR…LNST). 3 stretches are compositionally biased toward polar residues: residues 111 to 124 (QPHN…SSEN), 159 to 168 (ASSSTGGISH), and 210 to 230 (GTKS…SRNL). Residues 355–369 (REGRQVHDDLDDRTC) show a composition bias toward basic and acidic residues. Residues 370-396 (SESSSRNESPVRTITKDNSVGKILNST) show a composition bias toward polar residues.

It localises to the cytoplasm. It is found in the nucleus. In terms of biological role, involved in resistance to methylmercury. Overexpression suppresses a PAM1-SLV3 double null mutation. This is Protein BOP3 (BOP3) from Saccharomyces cerevisiae (strain ATCC 204508 / S288c) (Baker's yeast).